A 240-amino-acid chain; its full sequence is MAPK-interacting and spindle-stabilizing protein-like (240 aa).

A disordered region spans residues 1–240 (MSDEFSLADA…PMPGGPHSYH (240 aa)). At Ser2 the chain carries N-acetylserine. A phosphoserine mark is found at Ser2, Ser6, and Ser15. Positions 16 to 26 (PAKTSAVSNTK) are enriched in polar residues. Low complexity predominate over residues 34–43 (WPGSNPWNNP). 4 stretches are compositionally biased toward pro residues: residues 44 to 66 (SAPP…PFGP), 74 to 122 (SVPP…PELP), 159 to 185 (PNMP…PPVP), and 193 to 202 (AWGPPAPYPA).

Belongs to the MISS family.

The chain is MAPK-interacting and spindle-stabilizing protein-like (MAPK1IP1L) from Bos taurus (Bovine).